The primary structure comprises 387 residues: Pepsin A (387 aa).

An N-terminal signal peptide occupies residues 1-15 (MKWLLLLSLVALSEC). A propeptide spans 16-61 (LYKVSLIKKKSLRKNLIEHGLLKDFLKNNTLDPASKYFPQGEAATM) (activation peptide). Residues 75–384 (YFGTIGIGTP…DRANNQVGLA (310 aa)) enclose the Peptidase A1 domain. D93 is an active-site residue. C106 and C111 are oxidised to a cystine. A Phosphoserine modification is found at S129. The cysteines at positions 267 and 271 are disulfide-linked. Residue D276 is part of the active site. The cysteines at positions 310 and 343 are disulfide-linked.

Belongs to the peptidase A1 family.

The protein localises to the secreted. It carries out the reaction Preferential cleavage: hydrophobic, preferably aromatic, residues in P1 and P1' positions. Cleaves 1-Phe-|-Val-2, 4-Gln-|-His-5, 13-Glu-|-Ala-14, 14-Ala-|-Leu-15, 15-Leu-|-Tyr-16, 16-Tyr-|-Leu-17, 23-Gly-|-Phe-24, 24-Phe-|-Phe-25 and 25-Phe-|-Tyr-26 bonds in the B chain of insulin.. With respect to regulation, inhibited by pepstatin. Functionally, shows particularly broad specificity; although bonds involving phenylalanine and leucine are preferred, many others are also cleaved to some extent. This is Pepsin A (PGA) from Callithrix jacchus (White-tufted-ear marmoset).